The primary structure comprises 231 residues: Ureidoacrylate amidohydrolase RutB (231 aa).

The Proton acceptor role is filled by Asp-25. Residue Lys-134 is part of the active site. Catalysis depends on Cys-167, which acts as the Nucleophile.

This sequence belongs to the isochorismatase family. RutB subfamily.

The enzyme catalyses (Z)-3-ureidoacrylate + H2O + H(+) = (Z)-3-aminoacrylate + NH4(+) + CO2. It catalyses the reaction (Z)-3-ureidoacrylate + H2O = (Z)-3-aminoacrylate + carbamate + H(+). The catalysed reaction is (Z)-2-methylureidoacrylate + H2O + H(+) = (Z)-2-methylaminoacrylate + NH4(+) + CO2. Functionally, hydrolyzes ureidoacrylate to form aminoacrylate and carbamate. The carbamate hydrolyzes spontaneously, thereby releasing one of the nitrogen atoms of the pyrimidine ring as ammonia and one of its carbon atoms as CO2. This Escherichia coli O157:H7 (strain EC4115 / EHEC) protein is Ureidoacrylate amidohydrolase RutB.